Here is a 149-residue protein sequence, read N- to C-terminus: Probable conjugal transfer protein TrbE part 1 (149 aa).

Belongs to the TrbE/VirB4 family.

This chain is Probable conjugal transfer protein TrbE part 1 (trbEA), found in Sinorhizobium fredii (strain NBRC 101917 / NGR234).